The primary structure comprises 379 residues: ATPase ASNA1 homolog (379 aa).

The tract at residues methionine 1 to tyrosine 20 is disordered. Residues asparagine 7–aspartate 18 are compositionally biased toward low complexity. Residue lysine 46–threonine 53 participates in ATP binding. Residue aspartate 75 is part of the active site. The ATP site is built by glutamate 246 and asparagine 273.

It belongs to the arsA ATPase family. As to quaternary structure, homodimer.

It is found in the cytoplasm. Its subcellular location is the endoplasmic reticulum. Functionally, ATPase required for the post-translational delivery of tail-anchored (TA) proteins to the endoplasmic reticulum. Recognizes and selectively binds the transmembrane domain of TA proteins in the cytosol. This complex then targets to the endoplasmic reticulum by membrane-bound receptors, where the tail-anchored protein is released for insertion. This process is regulated by ATP binding and hydrolysis. ATP binding drives the homodimer towards the closed dimer state, facilitating recognition of newly synthesized TA membrane proteins. ATP hydrolysis is required for insertion. Subsequently, the homodimer reverts towards the open dimer state, lowering its affinity for the membrane-bound receptor, and returning it to the cytosol to initiate a new round of targeting. The polypeptide is ATPase ASNA1 homolog (Plasmodium falciparum (isolate 3D7)).